A 621-amino-acid polypeptide reads, in one-letter code: (-)-beta-phellandrene synthase 1, chloroplastic (621 aa).

Residues 1-49 (MALALVSVAPLVSMRRSLFSSPYELKSIDKTIPNLVMCRKRMLGRPSIR) constitute a chloroplast transit peptide. The Mg(2+) site is built by aspartate 372, aspartate 376, and aspartate 524. Residues 372–376 (DDIYD) carry the DDXXD motif motif.

The protein belongs to the terpene synthase family. Tpsd subfamily. Mg(2+) is required as a cofactor. Requires Mn(2+) as cofactor.

It is found in the plastid. The protein resides in the chloroplast. The catalysed reaction is (2E)-geranyl diphosphate = (-)-beta-phellandrene + diphosphate. It participates in terpene metabolism; oleoresin biosynthesis. It functions in the pathway secondary metabolite biosynthesis; terpenoid biosynthesis. Monoterpene synthase (TPS) involved in the biosynthesis of monoterpene natural products included in conifer oleoresin secretions and volatile emissions; these compounds contribute to biotic and abiotic stress defense against herbivores and pathogens. Catalyzes the conversion of (2E)-geranyl diphosphate (GPP) to (-)-beta-phellandrene. The protein is (-)-beta-phellandrene synthase 1, chloroplastic of Pinus banksiana (Jack pine).